Reading from the N-terminus, the 414-residue chain is Thyroid hormone receptor beta-B (414 aa).

The segment at 1–59 is modulating; sequence MPSSMSVRLFTASAAQRKKIQEGDCCVVLAGKTQGRFILIGAVARVSGYIPSYLDKDEL. NR C4-type zinc fingers lie at residues 60–80 and 98–122; these read CVVC…CEGC and CKYE…FKKC. The segment at residues 60–134 is a DNA-binding region (nuclear receptor); that stretch reads CVVCGDKATG…VGMATDLVLD (75 aa). Residues 170–414 form the NR LBD domain; that stretch reads EEWELIQVVT…PPLFLEVFED (245 aa).

Belongs to the nuclear hormone receptor family. NR1 subfamily.

The protein resides in the nucleus. Functionally, high affinity receptor for triiodothyronine (T3). The protein is Thyroid hormone receptor beta-B (thrb-b) of Xenopus laevis (African clawed frog).